The following is a 346-amino-acid chain: Uricase (346 aa).

The segment at Met1–Gly23 is disordered. Residues Lys39 and Thr84 each act as charge relay system in the active site. The urate site is built by Thr84, Asp85, Phe208, Arg225, Val273, Gln274, and Asn300. The active-site Charge relay system is the His302. The Microbody targeting signal motif lies at Ser344–Leu346.

This sequence belongs to the uricase family. In terms of tissue distribution, malpighian tubules.

Its subcellular location is the peroxisome. It carries out the reaction urate + O2 + H2O = 5-hydroxyisourate + H2O2. It functions in the pathway purine metabolism; urate degradation; (S)-allantoin from urate: step 1/3. With respect to regulation, repressed by 20-hydroxyecdysone. Catalyzes the oxidation of uric acid to 5-hydroxyisourate, which is further processed to form (S)-allantoin. The polypeptide is Uricase (Uro) (Drosophila pseudoobscura pseudoobscura (Fruit fly)).